The chain runs to 172 residues: Adenine phosphoribosyltransferase (172 aa).

The protein belongs to the purine/pyrimidine phosphoribosyltransferase family. Homodimer.

It is found in the cytoplasm. It carries out the reaction AMP + diphosphate = 5-phospho-alpha-D-ribose 1-diphosphate + adenine. The protein operates within purine metabolism; AMP biosynthesis via salvage pathway; AMP from adenine: step 1/1. Its function is as follows. Catalyzes a salvage reaction resulting in the formation of AMP, that is energically less costly than de novo synthesis. The sequence is that of Adenine phosphoribosyltransferase from Staphylococcus saprophyticus subsp. saprophyticus (strain ATCC 15305 / DSM 20229 / NCIMB 8711 / NCTC 7292 / S-41).